The primary structure comprises 347 residues: Putative ORC1-type DNA replication protein 1 (347 aa).

ATP contacts are provided by residues 34–38 (TGKTV), Tyr167, and Arg179.

Belongs to the CDC6/cdc18 family.

Involved in regulation of DNA replication. Has no effect on MCM helicase activity, either stimulatory or inhibitory. Does not bind DNA. The sequence is that of Putative ORC1-type DNA replication protein 1 (cdc6-1) from Thermoplasma acidophilum (strain ATCC 25905 / DSM 1728 / JCM 9062 / NBRC 15155 / AMRC-C165).